The sequence spans 518 residues: Membrane-bound lytic murein transglycosylase F (518 aa).

Residues 1 to 21 (MKKLKINYLFIGILALLLAVA) form the signal peptide. The interval 22 to 269 (LWPSIPWFGK…RIEEKYLGHG (248 aa)) is non-LT domain. The segment at 270–518 (DDFDYVDTRT…SRKGSEEKQN (249 aa)) is LT domain. Glu-314 is an active-site residue.

In the N-terminal section; belongs to the bacterial solute-binding protein 3 family. It in the C-terminal section; belongs to the transglycosylase Slt family.

Its subcellular location is the cell outer membrane. It carries out the reaction Exolytic cleavage of the (1-&gt;4)-beta-glycosidic linkage between N-acetylmuramic acid (MurNAc) and N-acetylglucosamine (GlcNAc) residues in peptidoglycan, from either the reducing or the non-reducing ends of the peptidoglycan chains, with concomitant formation of a 1,6-anhydrobond in the MurNAc residue.. Functionally, murein-degrading enzyme that degrades murein glycan strands and insoluble, high-molecular weight murein sacculi, with the concomitant formation of a 1,6-anhydromuramoyl product. Lytic transglycosylases (LTs) play an integral role in the metabolism of the peptidoglycan (PG) sacculus. Their lytic action creates space within the PG sacculus to allow for its expansion as well as for the insertion of various structures such as secretion systems and flagella. The sequence is that of Membrane-bound lytic murein transglycosylase F from Shigella boydii serotype 18 (strain CDC 3083-94 / BS512).